The primary structure comprises 71 residues: Large ribosomal subunit protein bL31 (71 aa).

Residues Cys16, Cys18, Cys37, and Cys40 each coordinate Zn(2+).

Belongs to the bacterial ribosomal protein bL31 family. Type A subfamily. As to quaternary structure, part of the 50S ribosomal subunit. It depends on Zn(2+) as a cofactor.

Functionally, binds the 23S rRNA. This chain is Large ribosomal subunit protein bL31, found in Sodalis glossinidius (strain morsitans).